The chain runs to 413 residues: Serine hydroxymethyltransferase (413 aa).

(6S)-5,6,7,8-tetrahydrofolate contacts are provided by residues Leu117 and 121 to 123 (GHL). Lys226 carries the post-translational modification N6-(pyridoxal phosphate)lysine. 349–351 (SPF) contributes to the (6S)-5,6,7,8-tetrahydrofolate binding site.

The protein belongs to the SHMT family. Homodimer. Pyridoxal 5'-phosphate is required as a cofactor.

The protein resides in the cytoplasm. The enzyme catalyses (6R)-5,10-methylene-5,6,7,8-tetrahydrofolate + glycine + H2O = (6S)-5,6,7,8-tetrahydrofolate + L-serine. It participates in one-carbon metabolism; tetrahydrofolate interconversion. Its pathway is amino-acid biosynthesis; glycine biosynthesis; glycine from L-serine: step 1/1. Catalyzes the reversible interconversion of serine and glycine with tetrahydrofolate (THF) serving as the one-carbon carrier. This reaction serves as the major source of one-carbon groups required for the biosynthesis of purines, thymidylate, methionine, and other important biomolecules. Also exhibits THF-independent aldolase activity toward beta-hydroxyamino acids, producing glycine and aldehydes, via a retro-aldol mechanism. This is Serine hydroxymethyltransferase from Listeria monocytogenes serovar 1/2a (strain ATCC BAA-679 / EGD-e).